The chain runs to 362 residues: Phosphoserine aminotransferase (362 aa).

Residues S9 and R42 each contribute to the L-glutamate site. Pyridoxal 5'-phosphate is bound by residues 76-77, W102, T153, D174, and Q197; that span reads GR. Position 198 is an N6-(pyridoxal phosphate)lysine (K198). 239-240 serves as a coordination point for pyridoxal 5'-phosphate; the sequence is NT.

It belongs to the class-V pyridoxal-phosphate-dependent aminotransferase family. SerC subfamily. As to quaternary structure, homodimer. It depends on pyridoxal 5'-phosphate as a cofactor.

It localises to the cytoplasm. It catalyses the reaction O-phospho-L-serine + 2-oxoglutarate = 3-phosphooxypyruvate + L-glutamate. It carries out the reaction 4-(phosphooxy)-L-threonine + 2-oxoglutarate = (R)-3-hydroxy-2-oxo-4-phosphooxybutanoate + L-glutamate. Its pathway is amino-acid biosynthesis; L-serine biosynthesis; L-serine from 3-phospho-D-glycerate: step 2/3. It functions in the pathway cofactor biosynthesis; pyridoxine 5'-phosphate biosynthesis; pyridoxine 5'-phosphate from D-erythrose 4-phosphate: step 3/5. Catalyzes the reversible conversion of 3-phosphohydroxypyruvate to phosphoserine and of 3-hydroxy-2-oxo-4-phosphonooxybutanoate to phosphohydroxythreonine. The chain is Phosphoserine aminotransferase from Salmonella arizonae (strain ATCC BAA-731 / CDC346-86 / RSK2980).